A 354-amino-acid polypeptide reads, in one-letter code: NADH-quinone oxidoreductase subunit H (354 aa).

Transmembrane regions (helical) follow at residues 25-45, 91-111, 126-146, 170-190, 205-225, 257-277, 290-310, and 330-350; these read LVRI…LILW, WVYL…WAVI, LLYA…AGWA, MGFA…SDIV, FLSW…VSGI, LFFL…SILF, FIPG…VFIW, and VFLP…MSPL.

Belongs to the complex I subunit 1 family. In terms of assembly, NDH-1 is composed of 14 different subunits. Subunits NuoA, H, J, K, L, M, N constitute the membrane sector of the complex.

Its subcellular location is the cell inner membrane. The catalysed reaction is a quinone + NADH + 5 H(+)(in) = a quinol + NAD(+) + 4 H(+)(out). NDH-1 shuttles electrons from NADH, via FMN and iron-sulfur (Fe-S) centers, to quinones in the respiratory chain. The immediate electron acceptor for the enzyme in this species is believed to be ubiquinone. Couples the redox reaction to proton translocation (for every two electrons transferred, four hydrogen ions are translocated across the cytoplasmic membrane), and thus conserves the redox energy in a proton gradient. This subunit may bind ubiquinone. The polypeptide is NADH-quinone oxidoreductase subunit H (Paraburkholderia phymatum (strain DSM 17167 / CIP 108236 / LMG 21445 / STM815) (Burkholderia phymatum)).